We begin with the raw amino-acid sequence, 339 residues long: Glycerol-3-phosphate dehydrogenase [NAD(P)+] (339 aa).

The NADPH site is built by serine 15, tyrosine 16, histidine 36, and lysine 110. Sn-glycerol 3-phosphate-binding residues include lysine 110, glycine 139, and threonine 141. An NADPH-binding site is contributed by alanine 143. Positions 195, 248, 258, 259, and 260 each coordinate sn-glycerol 3-phosphate. The active-site Proton acceptor is the lysine 195. Arginine 259 contacts NADPH. Positions 283 and 285 each coordinate NADPH.

The protein belongs to the NAD-dependent glycerol-3-phosphate dehydrogenase family.

The protein localises to the cytoplasm. It catalyses the reaction sn-glycerol 3-phosphate + NAD(+) = dihydroxyacetone phosphate + NADH + H(+). It carries out the reaction sn-glycerol 3-phosphate + NADP(+) = dihydroxyacetone phosphate + NADPH + H(+). It participates in membrane lipid metabolism; glycerophospholipid metabolism. Catalyzes the reduction of the glycolytic intermediate dihydroxyacetone phosphate (DHAP) to sn-glycerol 3-phosphate (G3P), the key precursor for phospholipid synthesis. The polypeptide is Glycerol-3-phosphate dehydrogenase [NAD(P)+] (Klebsiella pneumoniae subsp. pneumoniae (strain ATCC 700721 / MGH 78578)).